Consider the following 261-residue polypeptide: Syntaxin-7 (261 aa).

Ser-2 is subject to N-acetylserine. Residues Ser-2–Leu-238 are Cytoplasmic-facing. At Thr-4 the chain carries Phosphothreonine. The residue at position 45 (Ser-45) is a Phosphoserine. The stretch at Glu-47–Tyr-69 forms a coiled coil. Residue Ser-75 is modified to Phosphoserine. Position 79 is a phosphothreonine (Thr-79). Residues Ser-125, Ser-126, Ser-129, and Ser-205 each carry the phosphoserine modification. The disordered stretch occupies residues Ser-129–Gln-148. Positions Leu-165–Ala-227 constitute a t-SNARE coiled-coil homology domain. The chain crosses the membrane as a helical; Anchor for type IV membrane protein span at residues Cys-239 to Leu-259. At Asn-260 to Arg-261 the chain is on the vesicular side.

Belongs to the syntaxin family. In terms of assembly, forms a SNARE complex with VTI1B, STX8 and VAMP8 which functions in the homotypic fusion of late endosomes. Component of the SNARE complex composed of STX7, STX8, VAMP7 and VTI1B that is required for heterotypic fusion of late endosomes with lysosomes. Interacts with VPS11, VPS16 and VPS18. Interacts with VPS33A. Interacts with TPC1.

It localises to the early endosome membrane. May be involved in protein trafficking from the plasma membrane to the early endosome (EE) as well as in homotypic fusion of endocytic organelles. Mediates the endocytic trafficking from early endosomes to late endosomes and lysosomes. This is Syntaxin-7 (STX7) from Pongo abelii (Sumatran orangutan).